The sequence spans 108 residues: Putative septation protein SpoVG (108 aa).

This sequence belongs to the SpoVG family.

Functionally, could be involved in septation. This chain is Putative septation protein SpoVG, found in Bdellovibrio bacteriovorus (strain ATCC 15356 / DSM 50701 / NCIMB 9529 / HD100).